A 124-amino-acid chain; its full sequence is Bactoprenol-linked glucose translocase (124 aa).

A run of 4 helical transmembrane segments spans residues 12–32 (FFSYFLIGIVNTALHWGVFYA), 45–65 (NIVGFICAATFSFFANARCSF), 75–95 (FIFIFFMGAMSYLFGVLFDLL), and 96–116 (ALSPIFTLFTFSLFSLVLGYC).

This sequence belongs to the GtrA family.

It is found in the cell membrane. The protein operates within bacterial outer membrane biogenesis; lipopolysaccharide biosynthesis. Functionally, involved in O antigen modification. Involved in the translocation of bactoprenol-linked glucose across the cytoplasmic membrane. The sequence is that of Bactoprenol-linked glucose translocase (rfbI) from Shigella flexneri.